We begin with the raw amino-acid sequence, 72 residues long: Large ribosomal subunit protein uL29 (72 aa).

It belongs to the universal ribosomal protein uL29 family.

The polypeptide is Large ribosomal subunit protein uL29 (Prochlorococcus marinus (strain AS9601)).